The sequence spans 222 residues: MADS-box transcription factor 26 (222 aa).

An MADS-box domain is found at 1–61 (MARGKVQLRR…GKLYDLATTG (61 aa)). Residues 85-176 (RMDPKQEAMV…QEKIVEQNGL (92 aa)) enclose the K-box domain.

It localises to the nucleus. Its function is as follows. Probable transcription factor. This chain is MADS-box transcription factor 26 (MADS26), found in Oryza sativa subsp. indica (Rice).